An 82-amino-acid chain; its full sequence is ATP synthase subunit c (82 aa).

A run of 2 helical transmembrane segments spans residues 7-27 (AASV…PGIG) and 57-77 (FAFM…LLFA).

It belongs to the ATPase C chain family. As to quaternary structure, F-type ATPases have 2 components, F(1) - the catalytic core - and F(0) - the membrane proton channel. F(1) has five subunits: alpha(3), beta(3), gamma(1), delta(1), epsilon(1). F(0) has four main subunits: a(1), b(1), b'(1) and c(10-14). The alpha and beta chains form an alternating ring which encloses part of the gamma chain. F(1) is attached to F(0) by a central stalk formed by the gamma and epsilon chains, while a peripheral stalk is formed by the delta, b and b' chains.

The protein localises to the cellular thylakoid membrane. Functionally, f(1)F(0) ATP synthase produces ATP from ADP in the presence of a proton or sodium gradient. F-type ATPases consist of two structural domains, F(1) containing the extramembraneous catalytic core and F(0) containing the membrane proton channel, linked together by a central stalk and a peripheral stalk. During catalysis, ATP synthesis in the catalytic domain of F(1) is coupled via a rotary mechanism of the central stalk subunits to proton translocation. In terms of biological role, key component of the F(0) channel; it plays a direct role in translocation across the membrane. A homomeric c-ring of between 10-14 subunits forms the central stalk rotor element with the F(1) delta and epsilon subunits. The chain is ATP synthase subunit c from Prochlorococcus marinus (strain NATL1A).